Here is a 179-residue protein sequence, read N- to C-terminus: Large ribosomal subunit protein uL5 (179 aa).

It belongs to the universal ribosomal protein uL5 family. In terms of assembly, part of the 50S ribosomal subunit; part of the 5S rRNA/L5/L18/L25 subcomplex. Contacts the 5S rRNA and the P site tRNA. Forms a bridge to the 30S subunit in the 70S ribosome.

Its function is as follows. This is one of the proteins that bind and probably mediate the attachment of the 5S RNA into the large ribosomal subunit, where it forms part of the central protuberance. In the 70S ribosome it contacts protein S13 of the 30S subunit (bridge B1b), connecting the 2 subunits; this bridge is implicated in subunit movement. Contacts the P site tRNA; the 5S rRNA and some of its associated proteins might help stabilize positioning of ribosome-bound tRNAs. The sequence is that of Large ribosomal subunit protein uL5 from Buchnera aphidicola subsp. Cinara cedri (strain Cc).